The chain runs to 281 residues: Pantothenate synthetase (281 aa).

Position 30 to 37 (30 to 37 (MGYLHEGH)) interacts with ATP. His37 (proton donor) is an active-site residue. (R)-pantoate is bound at residue Gln61. A beta-alanine-binding site is contributed by Gln61. 147–150 (GEKD) provides a ligand contact to ATP. Gln153 is a binding site for (R)-pantoate. ATP-binding positions include Ile176 and 184 to 187 (KSSR).

Belongs to the pantothenate synthetase family. In terms of assembly, homodimer.

It is found in the cytoplasm. The catalysed reaction is (R)-pantoate + beta-alanine + ATP = (R)-pantothenate + AMP + diphosphate + H(+). It participates in cofactor biosynthesis; (R)-pantothenate biosynthesis; (R)-pantothenate from (R)-pantoate and beta-alanine: step 1/1. In terms of biological role, catalyzes the condensation of pantoate with beta-alanine in an ATP-dependent reaction via a pantoyl-adenylate intermediate. This is Pantothenate synthetase from Clostridium botulinum (strain Langeland / NCTC 10281 / Type F).